Here is a 734-residue protein sequence, read N- to C-terminus: Exonuclease 1 (734 aa).

Residues 1–99 are N-domain; it reads MGIQGLLQFL…KARREKRQTN (99 aa). 7 residues coordinate Mg(2+): Asp30, Asp78, Glu150, Asp152, Asp171, Asp173, and Asp225. Residues 138 to 229 form an I-domain region; it reads RSEGVDYIVA…ILSGCDYLPS (92 aa). Disordered regions lie at residues 599–650, 656–675, and 685–716; these read EAEN…CQFT, AHQS…KVPG, and GLRT…NENV. The span at 604–620 shows a compositional bias: polar residues; sequence PSWQSSCIKSDTVSQID. Basic and acidic residues predominate over residues 621-641; the sequence is SNEKLLKKQDIEDTDSDEHAS. Over residues 700–715 the composition is skewed to polar residues; the sequence is GLTNRSNTKATRNNEN.

The protein belongs to the XPG/RAD2 endonuclease family. EXO1 subfamily. The cofactor is Mg(2+).

It localises to the nucleus. Its function is as follows. 5'-&gt;3' double-stranded DNA exonuclease which may also contain a cryptic 3'-&gt;5' double-stranded DNA exonuclease activity. Also exhibits endonuclease activity against 5'-overhanging flap structures similar to those generated by displacement synthesis when DNA polymerase encounters the 5'-end of a downstream Okazaki fragment. Required for DNA mismatch repair (MMR). This Xenopus laevis (African clawed frog) protein is Exonuclease 1 (exo1).